Reading from the N-terminus, the 121-residue chain is Small ribosomal subunit protein uS13 (121 aa).

The tract at residues 98-121 (RGQKTRNNAHTVKGKPKSIAGKKK) is disordered. Positions 109–121 (VKGKPKSIAGKKK) are enriched in basic residues.

This sequence belongs to the universal ribosomal protein uS13 family. In terms of assembly, part of the 30S ribosomal subunit. Forms a loose heterodimer with protein S19. Forms two bridges to the 50S subunit in the 70S ribosome.

Located at the top of the head of the 30S subunit, it contacts several helices of the 16S rRNA. In the 70S ribosome it contacts the 23S rRNA (bridge B1a) and protein L5 of the 50S subunit (bridge B1b), connecting the 2 subunits; these bridges are implicated in subunit movement. Contacts the tRNAs in the A and P-sites. This is Small ribosomal subunit protein uS13 from Phytoplasma australiense.